Reading from the N-terminus, the 266-residue chain is 22 kDa alpha-zein 14 (266 aa).

The first 21 residues, methionine 1–alanine 21, serve as a signal peptide directing secretion.

This sequence belongs to the zein family.

Its function is as follows. Zeins are major seed storage proteins. The chain is 22 kDa alpha-zein 14 from Zea mays (Maize).